The chain runs to 182 residues: Ribosome maturation factor RimM (182 aa).

Residues Glu-103–Phe-182 enclose the PRC barrel domain.

This sequence belongs to the RimM family. Binds ribosomal protein uS19.

It is found in the cytoplasm. In terms of biological role, an accessory protein needed during the final step in the assembly of 30S ribosomal subunit, possibly for assembly of the head region. Essential for efficient processing of 16S rRNA. May be needed both before and after RbfA during the maturation of 16S rRNA. It has affinity for free ribosomal 30S subunits but not for 70S ribosomes. The sequence is that of Ribosome maturation factor RimM from Yersinia enterocolitica serotype O:8 / biotype 1B (strain NCTC 13174 / 8081).